Here is a 115-residue protein sequence, read N- to C-terminus: Ribonuclease P protein component (115 aa).

It belongs to the RnpA family. Consists of a catalytic RNA component (M1 or rnpB) and a protein subunit.

It catalyses the reaction Endonucleolytic cleavage of RNA, removing 5'-extranucleotides from tRNA precursor.. Its function is as follows. RNaseP catalyzes the removal of the 5'-leader sequence from pre-tRNA to produce the mature 5'-terminus. It can also cleave other RNA substrates such as 4.5S RNA. The protein component plays an auxiliary but essential role in vivo by binding to the 5'-leader sequence and broadening the substrate specificity of the ribozyme. The sequence is that of Ribonuclease P protein component from Phytoplasma australiense.